The primary structure comprises 77 residues: Translational regulator CsrA (77 aa).

The tract at residues 58 to 77 (ANRRTAEETLDQASRLLSQK) is disordered. Over residues 68 to 77 (DQASRLLSQK) the composition is skewed to polar residues.

Belongs to the CsrA/RsmA family. In terms of assembly, homodimer; the beta-strands of each monomer intercalate to form a hydrophobic core, while the alpha-helices form wings that extend away from the core.

It localises to the cytoplasm. A translational regulator that binds mRNA to regulate translation initiation and/or mRNA stability. Usually binds in the 5'-UTR at or near the Shine-Dalgarno sequence preventing ribosome-binding, thus repressing translation. Its main target seems to be the major flagellin gene, while its function is anatagonized by FliW. In Magnetococcus marinus (strain ATCC BAA-1437 / JCM 17883 / MC-1), this protein is Translational regulator CsrA.